Consider the following 879-residue polypeptide: Metabotropic glutamate receptor 3 (879 aa).

The N-terminal stretch at 1-22 is a signal peptide; that stretch reads MKMLTRLQVLTLALFSKGFLLS. The Extracellular portion of the chain corresponds to 23 to 576; the sequence is LGDHNFLRRE…EDYIRWEDAW (554 aa). C57 and C99 form a disulfide bridge. L-glutamate-binding positions include S151 and 172–174; that span reads AST. The N-linked (GlcNAc...) asparagine glycan is linked to N209. Y222 lines the L-glutamate pocket. Disulfide bonds link C240–C527, C361–C373, C412–C419, C509–C528, C513–C531, C534–C546, and C549–C562. The N-linked (GlcNAc...) asparagine glycan is linked to N292. D301 provides a ligand contact to L-glutamate. L-glutamate is bound at residue K389. N-linked (GlcNAc...) asparagine glycosylation is found at N414 and N439. A helical transmembrane segment spans residues 577–599; that stretch reads AIGPVTIACLGFMCTCMVVTVFI. Topologically, residues 600 to 613 are cytoplasmic; sequence KHNNTPLVKASGRE. Residues 614–634 traverse the membrane as a helical segment; that stretch reads LCYILLFGVGLSYCMTFFFIA. Over 635–645 the chain is Extracellular; the sequence is KPSPVICALRR. A helical membrane pass occupies residues 646–664; the sequence is LGLGSSFAICYSALLTKTN. The Cytoplasmic segment spans residues 665-688; it reads CIARIFDGVKNGAQRPKFISPSSQ. A helical membrane pass occupies residues 689-709; it reads VFICLGLILVQIVMVSVWLIL. At 710 to 734 the chain is on the extracellular side; sequence EAPGTRRYTLAEKRETVILKCNVKD. A helical membrane pass occupies residues 735–756; the sequence is SSMLISLTYDVILVILCTVYAF. Residues 757-769 lie on the Cytoplasmic side of the membrane; it reads KTRKCPENFNEAK. A helical transmembrane segment spans residues 770–792; the sequence is FIGFTMYTTCIIWLAFLPIFYVT. The Extracellular portion of the chain corresponds to 793 to 802; sequence SSDYRVQTTT. The chain crosses the membrane as a helical span at residues 803 to 828; the sequence is MCISVSLSGFVVLGCLFAPKVHIILF. At 829–879 the chain is on the cytoplasmic side; the sequence is QPQKNVVTHRLHLNRFSVSGTGTTYSQSSASTYVPTVCNGREVLDSTTSSL.

Belongs to the G-protein coupled receptor 3 family. As to quaternary structure, interacts with TAMALIN. Detected in brain cortex, thalamus, subthalamic nucleus, substantia nigra, hypothalamus, hippocampus, corpus callosum, caudate nucleus and amygdala.

It localises to the cell membrane. Functionally, G-protein coupled receptor for glutamate. Ligand binding causes a conformation change that triggers signaling via guanine nucleotide-binding proteins (G proteins) and modulates the activity of down-stream effectors. Signaling inhibits adenylate cyclase activity. This is Metabotropic glutamate receptor 3 (GRM3) from Homo sapiens (Human).